A 262-amino-acid chain; its full sequence is 3-deoxy-manno-octulosonate cytidylyltransferase (262 aa).

Belongs to the KdsB family.

It is found in the cytoplasm. It carries out the reaction 3-deoxy-alpha-D-manno-oct-2-ulosonate + CTP = CMP-3-deoxy-beta-D-manno-octulosonate + diphosphate. It functions in the pathway nucleotide-sugar biosynthesis; CMP-3-deoxy-D-manno-octulosonate biosynthesis; CMP-3-deoxy-D-manno-octulosonate from 3-deoxy-D-manno-octulosonate and CTP: step 1/1. It participates in bacterial outer membrane biogenesis; lipopolysaccharide biosynthesis. In terms of biological role, activates KDO (a required 8-carbon sugar) for incorporation into bacterial lipopolysaccharide in Gram-negative bacteria. This chain is 3-deoxy-manno-octulosonate cytidylyltransferase, found in Acidovorax ebreus (strain TPSY) (Diaphorobacter sp. (strain TPSY)).